Reading from the N-terminus, the 1056-residue chain is Multidrug resistance protein MdtB (1056 aa).

Transmembrane regions (helical) follow at residues 16–36 (FILRPVATTLFMIAILLAGII), 342–362 (DVQFELLLAIALVVMVIYVFL), 373–393 (IAVPLSLVGTFAVMYFCGFSV), 396–416 (LTLMALTIAAGFVVDDAIVVI), 440–460 (IGFTIISLTFSLIAVLIPLLF), 472–492 (FAITLAVAILISAVVSLTLTP), 537–557 (WITLGVAFSTLAFTALLYLTI), 869–889 (LILAAVISMYIVLGILYESFI), 890–910 (HPVTILSTLPTAGVGALLALM), 911–931 (VGGYELDIIAIIGIILLIGIV), 968–988 (ILMTTMAALLGALPLMLSTGI), and 1002–1022 (GGLIMSQILTLFTTPVIYLLF). The segment at 1037 to 1056 (LQSQNQRELDHSPVNHQEPL) is disordered. Residues 1043–1056 (RELDHSPVNHQEPL) are compositionally biased toward basic and acidic residues.

The protein belongs to the resistance-nodulation-cell division (RND) (TC 2.A.6) family. MdtB subfamily. Part of a tripartite efflux system composed of MdtA, MdtB and MdtC. MdtB forms a heteromultimer with MdtC.

The protein resides in the cell inner membrane. The polypeptide is Multidrug resistance protein MdtB (Xenorhabdus bovienii (strain SS-2004) (Xenorhabdus nematophila subsp. bovienii)).